The following is a 441-amino-acid chain: Ribosomal protein uS12 methylthiotransferase RimO (441 aa).

In terms of domain architecture, MTTase N-terminal spans 8–118; sequence PKIGFVSLGC…VLQHVHHYVP (111 aa). Residues C17, C53, C82, C150, C154, and C157 each contribute to the [4Fe-4S] cluster site. Positions 136 to 373 constitute a Radical SAM core domain; the sequence is LTPRHYAYLK…MQLQQQISAE (238 aa). One can recognise a TRAM domain in the interval 376–441; sequence QEKVGREILV…DEYDLWGSRV (66 aa).

This sequence belongs to the methylthiotransferase family. RimO subfamily. Requires [4Fe-4S] cluster as cofactor.

Its subcellular location is the cytoplasm. The enzyme catalyses L-aspartate(89)-[ribosomal protein uS12]-hydrogen + (sulfur carrier)-SH + AH2 + 2 S-adenosyl-L-methionine = 3-methylsulfanyl-L-aspartate(89)-[ribosomal protein uS12]-hydrogen + (sulfur carrier)-H + 5'-deoxyadenosine + L-methionine + A + S-adenosyl-L-homocysteine + 2 H(+). In terms of biological role, catalyzes the methylthiolation of an aspartic acid residue of ribosomal protein uS12. The sequence is that of Ribosomal protein uS12 methylthiotransferase RimO from Salmonella heidelberg (strain SL476).